Reading from the N-terminus, the 178-residue chain is uncharacterized protein (178 aa).

Residues 1-16 are compositionally biased toward basic and acidic residues; that stretch reads MNKRTSVDASKEDLHP. Residues 1-43 are disordered; it reads MNKRTSVDASKEDLHPADPQSGEGVPPNRKNTKTSPRGEGTAP.

This is an uncharacterized protein from Homo sapiens (Human).